Consider the following 318-residue polypeptide: NLP effector protein 7 (318 aa).

An N-terminal signal peptide occupies residues 1–19 (MRLFAFLWSSVAFLSTVQA). The span at 23–41 (QTASQTQDDSSTPTPTPTD) shows a compositional bias: low complexity. 2 disordered regions span residues 23 to 42 (QTAS…PTDK) and 51 to 96 (RTKT…TPDP). A compositionally biased stretch (polar residues) spans 55–65 (PMATPNRTIMP). The N-linked (GlcNAc...) asparagine glycan is linked to N60. Residues 73 to 96 (TEPPTPEPTYLPTPSPTPAPTPDP) are compositionally biased toward pro residues. A Conserved undecapeptide motif I motif is present at residues 185-195 (AIMYSWYFPKD). The short motif at 202–208 (GHRHDWE) is the Hepta-peptide GHRHDWE motif II element.

Belongs to the Necrosis inducing protein (NPP1) family.

It is found in the secreted. Secreted effector that contributes moderately to virulence during infection by P.capsici. Does not cause visible reaction of C.annuum for several days after inoculation, but by 7 days after inoculation, small necrotic lesions become visible. Leads only to chlorotic areas, without necrosis at 7 days after non-host N.benthamiana leaves infection. The sequence is that of NLP effector protein 7 from Phytophthora capsici.